We begin with the raw amino-acid sequence, 72 residues long: DNA-directed RNA polymerase subunit omega (72 aa).

The protein belongs to the RNA polymerase subunit omega family. As to quaternary structure, the RNAP catalytic core consists of 2 alpha, 1 beta, 1 beta' and 1 omega subunit. When a sigma factor is associated with the core the holoenzyme is formed, which can initiate transcription.

It catalyses the reaction RNA(n) + a ribonucleoside 5'-triphosphate = RNA(n+1) + diphosphate. Functionally, promotes RNA polymerase assembly. Latches the N- and C-terminal regions of the beta' subunit thereby facilitating its interaction with the beta and alpha subunits. The sequence is that of DNA-directed RNA polymerase subunit omega from Staphylococcus aureus (strain Mu3 / ATCC 700698).